A 178-amino-acid chain; its full sequence is Protein FAM89A (178 aa).

Belongs to the FAM89 family.

In Bos taurus (Bovine), this protein is Protein FAM89A (FAM89A).